The chain runs to 284 residues: Nucleotide-binding protein SPO0713 (284 aa).

3–10 (GPSGAGRS) provides a ligand contact to ATP. 50 to 53 (DARN) is a GTP binding site.

It belongs to the RapZ-like family.

Functionally, displays ATPase and GTPase activities. The protein is Nucleotide-binding protein SPO0713 of Ruegeria pomeroyi (strain ATCC 700808 / DSM 15171 / DSS-3) (Silicibacter pomeroyi).